The following is a 95-amino-acid chain: Aspartyl/glutamyl-tRNA(Asn/Gln) amidotransferase subunit C (95 aa).

Belongs to the GatC family. As to quaternary structure, heterotrimer of A, B and C subunits.

The enzyme catalyses L-glutamyl-tRNA(Gln) + L-glutamine + ATP + H2O = L-glutaminyl-tRNA(Gln) + L-glutamate + ADP + phosphate + H(+). It carries out the reaction L-aspartyl-tRNA(Asn) + L-glutamine + ATP + H2O = L-asparaginyl-tRNA(Asn) + L-glutamate + ADP + phosphate + 2 H(+). Its function is as follows. Allows the formation of correctly charged Asn-tRNA(Asn) or Gln-tRNA(Gln) through the transamidation of misacylated Asp-tRNA(Asn) or Glu-tRNA(Gln) in organisms which lack either or both of asparaginyl-tRNA or glutaminyl-tRNA synthetases. The reaction takes place in the presence of glutamine and ATP through an activated phospho-Asp-tRNA(Asn) or phospho-Glu-tRNA(Gln). The sequence is that of Aspartyl/glutamyl-tRNA(Asn/Gln) amidotransferase subunit C from Ruegeria pomeroyi (strain ATCC 700808 / DSM 15171 / DSS-3) (Silicibacter pomeroyi).